The following is a 501-amino-acid chain: ATP synthase subunit alpha (501 aa).

169-176 serves as a coordination point for ATP; sequence GDRQTGKT.

The protein belongs to the ATPase alpha/beta chains family. F-type ATPases have 2 components, CF(1) - the catalytic core - and CF(0) - the membrane proton channel. CF(1) has five subunits: alpha(3), beta(3), gamma(1), delta(1), epsilon(1). CF(0) has three main subunits: a(1), b(2) and c(9-12). The alpha and beta chains form an alternating ring which encloses part of the gamma chain. CF(1) is attached to CF(0) by a central stalk formed by the gamma and epsilon chains, while a peripheral stalk is formed by the delta and b chains.

Its subcellular location is the cell membrane. It carries out the reaction ATP + H2O + 4 H(+)(in) = ADP + phosphate + 5 H(+)(out). Produces ATP from ADP in the presence of a proton gradient across the membrane. The alpha chain is a regulatory subunit. The sequence is that of ATP synthase subunit alpha from Streptococcus agalactiae serotype Ia (strain ATCC 27591 / A909 / CDC SS700).